The chain runs to 470 residues: Putative multidrug resistance protein MdtD (470 aa).

The Periplasmic segment spans residues methionine 1 to glutamine 11. Residues leucine 12–alanine 32 form a helical membrane-spanning segment. Over leucine 33–histidine 48 the chain is Cytoplasmic. The chain crosses the membrane as a helical span at residues methionine 49 to alanine 69. Over aspartate 70 to asparagine 76 the chain is Periplasmic. Residues isoleucine 77–threonine 97 traverse the membrane as a helical segment. The Cytoplasmic portion of the chain corresponds to leucine 98 to leucine 101. Residues valine 102 to methionine 124 traverse the membrane as a helical segment. Topologically, residues lysine 125 to threonine 137 are periplasmic. The helical transmembrane segment at phenylalanine 138–valine 158 threads the bilayer. At glutamate 159 to histidine 164 the chain is on the cytoplasmic side. The helical transmembrane segment at tryptophan 165–methionine 185 threads the bilayer. Residues proline 186–aspartate 196 are Periplasmic-facing. A helical membrane pass occupies residues leucine 197–serine 217. At lysine 218–proline 224 the chain is on the cytoplasmic side. A helical transmembrane segment spans residues tryptophan 225 to alanine 245. Over lysine 246–threonine 262 the chain is Periplasmic. The helical transmembrane segment at phenylalanine 263–methionine 283 threads the bilayer. At threonine 284–proline 285 the chain is on the cytoplasmic side. The chain crosses the membrane as a helical span at residues valine 286 to methionine 306. The Periplasmic portion of the chain corresponds to valine 307–serine 341. Residues leucine 342 to leucine 362 form a helical membrane-spanning segment. The Cytoplasmic segment spans residues glutamine 363–serine 395. The chain crosses the membrane as a helical span at residues methionine 396–phenylalanine 416. Residues glycine 417–histidine 430 are Periplasmic-facing. A helical membrane pass occupies residues valine 431–alanine 451. Over arginine 452 to leucine 470 the chain is Cytoplasmic.

The protein belongs to the major facilitator superfamily. TCR/Tet family.

It is found in the cell inner membrane. This Salmonella agona (strain SL483) protein is Putative multidrug resistance protein MdtD.